We begin with the raw amino-acid sequence, 355 residues long: MSYFYEKCNCKTSITYSFFMDKLEKLEKMSTIINNFDLESYGLKYYCQYPDCKKCQTNQFYQLENIIWPNNIRHIIKHHHSYPSKYFTNIVIYTVCTNDYIINPPIKINTKNISDFSYVQLSYNKLLIIDALFRQGSYPRYLVPKNHSNPSTRFIYSEHSGVLTLKNSVIDNIIVSTESSRIDSNDTDIYLPTNIDLMKNHEFLFHTHPNSITYAGRLKNNIIYEFPSANDILNFIKYHNTGIAQASIIAAPEGIYVIRPIEYNRDFKINLENFTDLKKYILKLENKAVKKLSDVPNLSDPDTFHENVSHNFSYIKLYNKYIRQYNIFVEFYPRKKKNNEWILPSIYLQRISTSK.

This is an uncharacterized protein from Acanthamoeba polyphaga (Amoeba).